The sequence spans 112 residues: DNA-binding protein TON_1102 (112 aa).

This sequence belongs to the PDCD5 family.

This chain is DNA-binding protein TON_1102, found in Thermococcus onnurineus (strain NA1).